The sequence spans 366 residues: Protein FAM110B (366 aa).

3 disordered regions span residues 127-150 (SSEG…HRDT), 163-182 (KVYP…HVSR), and 214-253 (IPCS…PSLQ). Phosphoserine is present on residues S234 and S297. The tract at residues 313 to 333 (DCEQSQDSNSDLRNDDSANDR) is disordered. A compositionally biased stretch (basic and acidic residues) spans 322–331 (SDLRNDDSAN).

Belongs to the FAM110 family.

The protein resides in the cytoplasm. The protein localises to the cytoskeleton. Its subcellular location is the microtubule organizing center. It is found in the centrosome. The polypeptide is Protein FAM110B (Fam110b) (Rattus norvegicus (Rat)).